We begin with the raw amino-acid sequence, 510 residues long: NAD(P)H-quinone oxidoreductase subunit 2 B, chloroplastic (510 aa).

The next 13 membrane-spanning stretches (helical) occupy residues 24-44 (LLLF…GLIL), 57-77 (IPWL…ALLF), 99-119 (IFQF…VEYI), 124-144 (MAIT…MFLC), 149-169 (LITI…LSGY), 183-203 (YLLM…WLYG), 227-247 (PGIS…LSPA), 295-315 (WHLH…LIAI), 323-343 (MLAY…IVGD), 347-367 (GYAS…GTFA), 395-415 (ALSL…AGFF), 418-438 (LHLF…IGLL), and 484-504 (MIVC…IIAI).

It belongs to the complex I subunit 2 family. As to quaternary structure, NDH is composed of at least 16 different subunits, 5 of which are encoded in the nucleus.

It localises to the plastid. Its subcellular location is the chloroplast thylakoid membrane. The catalysed reaction is a plastoquinone + NADH + (n+1) H(+)(in) = a plastoquinol + NAD(+) + n H(+)(out). It carries out the reaction a plastoquinone + NADPH + (n+1) H(+)(in) = a plastoquinol + NADP(+) + n H(+)(out). Functionally, NDH shuttles electrons from NAD(P)H:plastoquinone, via FMN and iron-sulfur (Fe-S) centers, to quinones in the photosynthetic chain and possibly in a chloroplast respiratory chain. The immediate electron acceptor for the enzyme in this species is believed to be plastoquinone. Couples the redox reaction to proton translocation, and thus conserves the redox energy in a proton gradient. The polypeptide is NAD(P)H-quinone oxidoreductase subunit 2 B, chloroplastic (Buxus microphylla (Littleleaf boxwood)).